The following is a 196-amino-acid chain: UMP-CMP kinase (196 aa).

13–18 (GAGKGT) contacts ATP. Residues 33–63 (SAGDLLRDERKKPDSQYGELIESYIRDGRIV) form an NMP region. Residues Arg39, 61-63 (RIV), and 93-96 (GFPR) each bind a ribonucleoside 5'-phosphate. Position 100 (Asn100) interacts with CMP. The interval 133–143 (ERGKSSGRSDD) is LID. Arg134 contacts ATP. Residues Arg140 and Arg151 each contribute to the a ribonucleoside 5'-phosphate site. An ATP-binding site is contributed by Lys179.

This sequence belongs to the adenylate kinase family. UMP-CMP kinase subfamily. As to quaternary structure, monomer. Requires Mg(2+) as cofactor.

The protein resides in the cytoplasm. It localises to the nucleus. The enzyme catalyses CMP + ATP = CDP + ADP. It catalyses the reaction dCMP + ATP = dCDP + ADP. It carries out the reaction UMP + ATP = UDP + ADP. The catalysed reaction is a 2'-deoxyribonucleoside 5'-diphosphate + ATP = a 2'-deoxyribonucleoside 5'-triphosphate + ADP. The enzyme catalyses a ribonucleoside 5'-diphosphate + ATP = a ribonucleoside 5'-triphosphate + ADP. Catalyzes the phosphorylation of pyrimidine nucleoside monophosphates at the expense of ATP. Plays an important role in de novo pyrimidine nucleotide biosynthesis. Has preference for UMP and CMP as phosphate acceptors. Also displays broad nucleoside diphosphate kinase activity. This is UMP-CMP kinase (cmpk1) from Xenopus tropicalis (Western clawed frog).